The chain runs to 624 residues: tRNA uridine 5-carboxymethylaminomethyl modification enzyme MnmG (624 aa).

FAD is bound by residues Gly13 to Gly18, Val125, and Ser180. Gly273 to Phe287 contributes to the NAD(+) binding site. Residue Gln370 coordinates FAD.

The protein belongs to the MnmG family. In terms of assembly, homodimer. Heterotetramer of two MnmE and two MnmG subunits. FAD is required as a cofactor.

The protein resides in the cytoplasm. Functionally, NAD-binding protein involved in the addition of a carboxymethylaminomethyl (cmnm) group at the wobble position (U34) of certain tRNAs, forming tRNA-cmnm(5)s(2)U34. The sequence is that of tRNA uridine 5-carboxymethylaminomethyl modification enzyme MnmG from Legionella pneumophila subsp. pneumophila (strain Philadelphia 1 / ATCC 33152 / DSM 7513).